The sequence spans 218 residues: Glutathione S-transferase (218 aa).

Positions 2–88 (PVTLGYWDIR…YIARKHDLCG (87 aa)) constitute a GST N-terminal domain. Glutathione-binding positions include 7 to 8 (YW), 46 to 50 (WLNEK), 59 to 60 (NL), and 72 to 73 (QS). The region spanning 90–208 (TEEERIQLDI…KSSRFSCKQI (119 aa)) is the GST C-terminal domain. Tyrosine 116 contributes to the substrate binding site.

Belongs to the GST superfamily. Mu family. As to quaternary structure, homodimer.

The protein resides in the cytoplasm. The enzyme catalyses RX + glutathione = an S-substituted glutathione + a halide anion + H(+). Functionally, conjugation of reduced glutathione to a wide number of exogenous and endogenous hydrophobic electrophiles. The protein is Glutathione S-transferase of Mesocricetus auratus (Golden hamster).